The following is a 139-amino-acid chain: uncharacterized protein (139 aa).

The disordered stretch occupies residues 83 to 109 (LIPPKKTSPATSSSLKPPRRPRGCLNG). Residues 86–98 (PKKTSPATSSSLK) show a composition bias toward low complexity.

It to M.pneumoniae MPN_091 and MPN_463.

This is an uncharacterized protein from Mycoplasma pneumoniae (strain ATCC 29342 / M129 / Subtype 1) (Mycoplasmoides pneumoniae).